The primary structure comprises 341 residues: L-threonine 3-dehydrogenase (341 aa).

Cys-38 lines the Zn(2+) pocket. Active-site charge relay system residues include Thr-40 and His-43. Positions 63, 64, 93, 96, 99, and 107 each coordinate Zn(2+). Residues Ile-175, Asp-195, Arg-200, 262 to 264 (LGI), and 286 to 287 (IY) contribute to the NAD(+) site.

It belongs to the zinc-containing alcohol dehydrogenase family. In terms of assembly, homotetramer. Zn(2+) serves as cofactor.

It is found in the cytoplasm. The enzyme catalyses L-threonine + NAD(+) = (2S)-2-amino-3-oxobutanoate + NADH + H(+). It functions in the pathway amino-acid degradation; L-threonine degradation via oxydo-reductase pathway; glycine from L-threonine: step 1/2. Functionally, catalyzes the NAD(+)-dependent oxidation of L-threonine to 2-amino-3-ketobutyrate. The polypeptide is L-threonine 3-dehydrogenase (Alteromonas mediterranea (strain DSM 17117 / CIP 110805 / LMG 28347 / Deep ecotype)).